Here is a 348-residue protein sequence, read N- to C-terminus: 3-isopropylmalate dehydrogenase (348 aa).

Residue 76–87 (GPKWTDPNNRPE) participates in NAD(+) binding. Residues arginine 94, arginine 104, arginine 132, and aspartate 217 each contribute to the substrate site. Positions 217, 241, and 245 each coordinate Mg(2+). 275–287 (GSAPDIAGKNVAN) lines the NAD(+) pocket.

This sequence belongs to the isocitrate and isopropylmalate dehydrogenases family. LeuB type 1 subfamily. As to quaternary structure, homodimer. The cofactor is Mg(2+). It depends on Mn(2+) as a cofactor.

Its subcellular location is the cytoplasm. The enzyme catalyses (2R,3S)-3-isopropylmalate + NAD(+) = 4-methyl-2-oxopentanoate + CO2 + NADH. It functions in the pathway amino-acid biosynthesis; L-leucine biosynthesis; L-leucine from 3-methyl-2-oxobutanoate: step 3/4. In terms of biological role, catalyzes the oxidation of 3-carboxy-2-hydroxy-4-methylpentanoate (3-isopropylmalate) to 3-carboxy-4-methyl-2-oxopentanoate. The product decarboxylates to 4-methyl-2 oxopentanoate. The protein is 3-isopropylmalate dehydrogenase of Staphylococcus aureus (strain MRSA252).